The chain runs to 472 residues: Kynureninase 1 (472 aa).

Pyridoxal 5'-phosphate-binding positions include Leu146, Thr147, 174 to 177 (FPSD), Ser231, Asp260, His263, and Tyr285. Lys286 bears the N6-(pyridoxal phosphate)lysine mark. Positions 326 and 354 each coordinate pyridoxal 5'-phosphate.

The protein belongs to the kynureninase family. In terms of assembly, homodimer. Requires pyridoxal 5'-phosphate as cofactor.

It is found in the cytoplasm. The catalysed reaction is L-kynurenine + H2O = anthranilate + L-alanine + H(+). The enzyme catalyses 3-hydroxy-L-kynurenine + H2O = 3-hydroxyanthranilate + L-alanine + H(+). Its pathway is amino-acid degradation; L-kynurenine degradation; L-alanine and anthranilate from L-kynurenine: step 1/1. It functions in the pathway cofactor biosynthesis; NAD(+) biosynthesis; quinolinate from L-kynurenine: step 2/3. Functionally, catalyzes the cleavage of L-kynurenine (L-Kyn) and L-3-hydroxykynurenine (L-3OHKyn) into anthranilic acid (AA) and 3-hydroxyanthranilic acid (3-OHAA), respectively. In Aspergillus niger (strain ATCC MYA-4892 / CBS 513.88 / FGSC A1513), this protein is Kynureninase 1 (bna5-1).